The primary structure comprises 162 residues: Phenazine biosynthesis protein PhzB 2 (162 aa).

Phosphothreonine is present on Thr-91.

This sequence belongs to the PhzA/PhzB family.

Its function is as follows. Involved in the biosynthesis of the antibiotic phenazine, a nitrogen-containing heterocyclic molecule having important roles in virulence, competition and biological control. The protein is Phenazine biosynthesis protein PhzB 2 (phzB2) of Pseudomonas aeruginosa (strain UCBPP-PA14).